A 178-amino-acid polypeptide reads, in one-letter code: Large ribosomal subunit protein uL6 (178 aa).

It belongs to the universal ribosomal protein uL6 family. In terms of assembly, part of the 50S ribosomal subunit.

In terms of biological role, this protein binds to the 23S rRNA, and is important in its secondary structure. It is located near the subunit interface in the base of the L7/L12 stalk, and near the tRNA binding site of the peptidyltransferase center. The protein is Large ribosomal subunit protein uL6 of Campylobacter concisus (strain 13826).